The primary structure comprises 468 residues: Mitochondrial dynamics protein MID51 (468 aa).

Residues 1–29 are Mitochondrial intermembrane-facing; sequence MAGVNGDRKGKKDDNGLGTAIDFVLSNAK. A helical membrane pass occupies residues 30 to 47; the sequence is LVLGVGGAAMLGIATLAV. The Cytoplasmic segment spans residues 48-468; that stretch reads KRMYDRALSA…SDPESLLRTV (421 aa). A dimerization region spans residues 50–196; it reads MYDRALSAPS…LSGSLYDDLQ (147 aa). The disordered stretch occupies residues 56–123; it reads SAPSSPTKAD…RGLARGGRPA (68 aa). Residues 91–108 are compositionally biased toward polar residues; the sequence is QNVSRSLQTLPTSSSSFK. The interval 161-170 is important for interaction with DNM1L; sequence AALDICAELR. Serine 188, serine 190, and histidine 202 together coordinate ADP. The tract at residues 235-244 is important for interaction with DNM1L; sequence RRENLEYFPR. ADP-binding residues include serine 344, arginine 346, and lysine 372.

The protein belongs to the MID49/MID51 family. As to quaternary structure, homodimer.

The protein resides in the mitochondrion outer membrane. Functionally, mitochondrial outer membrane protein which regulates mitochondrial fission/fusion dynamics. Promotes the recruitment and association of the fission mediator dynamin-related protein 1 (DNM1L) to the mitochondrial surface independently of the mitochondrial fission FIS1 and MFF proteins. Regulates DNM1L GTPase activity and DNM1L oligomerization. This is Mitochondrial dynamics protein MID51 (mief1) from Danio rerio (Zebrafish).